A 388-amino-acid chain; its full sequence is Succinate--CoA ligase [ADP-forming] subunit beta (388 aa).

In terms of domain architecture, ATP-grasp spans 9–244; it reads KQLFARYGMP…PSQEDAREAH (236 aa). Residues lysine 46, 53–55, glutamate 99, threonine 102, and glutamate 107 contribute to the ATP site; that span reads GRG. Mg(2+) is bound by residues asparagine 199 and aspartate 213. Residues asparagine 264 and 321 to 323 each bind substrate; that span reads GIV.

The protein belongs to the succinate/malate CoA ligase beta subunit family. In terms of assembly, heterotetramer of two alpha and two beta subunits. Requires Mg(2+) as cofactor.

It catalyses the reaction succinate + ATP + CoA = succinyl-CoA + ADP + phosphate. The catalysed reaction is GTP + succinate + CoA = succinyl-CoA + GDP + phosphate. It participates in carbohydrate metabolism; tricarboxylic acid cycle; succinate from succinyl-CoA (ligase route): step 1/1. Its function is as follows. Succinyl-CoA synthetase functions in the citric acid cycle (TCA), coupling the hydrolysis of succinyl-CoA to the synthesis of either ATP or GTP and thus represents the only step of substrate-level phosphorylation in the TCA. The beta subunit provides nucleotide specificity of the enzyme and binds the substrate succinate, while the binding sites for coenzyme A and phosphate are found in the alpha subunit. This Yersinia pseudotuberculosis serotype O:1b (strain IP 31758) protein is Succinate--CoA ligase [ADP-forming] subunit beta.